The following is a 150-amino-acid chain: Large ribosomal subunit protein bL9 (150 aa).

The protein belongs to the bacterial ribosomal protein bL9 family.

Functionally, binds to the 23S rRNA. The polypeptide is Large ribosomal subunit protein bL9 (Mycoplasmopsis pulmonis (strain UAB CTIP) (Mycoplasma pulmonis)).